A 29-amino-acid polypeptide reads, in one-letter code: MDIITFGWVAVAAFFALSIAFVVWGRNGM.

A helical transmembrane segment spans residues 3-23; sequence IITFGWVAVAAFFALSIAFVV.

The protein belongs to the PetN family. In terms of assembly, the 4 large subunits of the cytochrome b6-f complex are cytochrome b6, subunit IV (17 kDa polypeptide, PetD), cytochrome f and the Rieske protein, while the 4 small subunits are PetG, PetL, PetM and PetN. The complex functions as a dimer.

The protein localises to the cellular thylakoid membrane. Its function is as follows. Component of the cytochrome b6-f complex, which mediates electron transfer between photosystem II (PSII) and photosystem I (PSI), cyclic electron flow around PSI, and state transitions. The sequence is that of Cytochrome b6-f complex subunit 8 from Synechococcus sp. (strain JA-3-3Ab) (Cyanobacteria bacterium Yellowstone A-Prime).